A 543-amino-acid polypeptide reads, in one-letter code: Biotinidase (543 aa).

A signal peptide spans 1-41; the sequence is MAHAHIQGGRRAKSRFVVCIMSGARSKLALFLCGCYVVALG. Residues 72–351 form the CN hydrolase domain; it reads NPLALISRQE…VGLIGAENAT (280 aa). The active-site Proton acceptor is Glu-112. Residue Asn-119 is glycosylated (N-linked (GlcNAc...) asparagine). A glycan (N-linked (GlcNAc...) (complex) asparagine) is linked at Asn-150. Residue Asn-203 is glycosylated (N-linked (GlcNAc...) asparagine). Lys-212 functions as the Proton donor in the catalytic mechanism. Cys-245 serves as the catalytic Nucleophile. Residues Asn-349, Asn-402, and Asn-489 are each glycosylated (N-linked (GlcNAc...) asparagine).

The protein belongs to the carbon-nitrogen hydrolase superfamily. BTD/VNN family.

It is found in the secreted. The protein resides in the extracellular space. The catalysed reaction is biocytin + H2O = biotin + L-lysine. It carries out the reaction biotin amide + H2O = biotin + NH4(+). Catalytic release of biotin from biocytin, the product of biotin-dependent carboxylases degradation. This chain is Biotinidase, found in Homo sapiens (Human).